Here is a 204-residue protein sequence, read N- to C-terminus: Thymidylate kinase (204 aa).

9 to 16 provides a ligand contact to ATP; it reads GIEASGKT.

Belongs to the thymidylate kinase family.

It carries out the reaction dTMP + ATP = dTDP + ADP. Phosphorylation of dTMP to form dTDP in both de novo and salvage pathways of dTTP synthesis. The protein is Thymidylate kinase of Sulfurihydrogenibium sp. (strain YO3AOP1).